The primary structure comprises 158 residues: Cyclic pyranopterin monophosphate synthase (158 aa).

Residues 74–76 (MCH) and 112–113 (ME) each bind substrate. Asp-127 is an active-site residue.

It belongs to the MoaC family. Homohexamer; trimer of dimers.

The enzyme catalyses (8S)-3',8-cyclo-7,8-dihydroguanosine 5'-triphosphate = cyclic pyranopterin phosphate + diphosphate. It functions in the pathway cofactor biosynthesis; molybdopterin biosynthesis. Its function is as follows. Catalyzes the conversion of (8S)-3',8-cyclo-7,8-dihydroguanosine 5'-triphosphate to cyclic pyranopterin monophosphate (cPMP). This is Cyclic pyranopterin monophosphate synthase from Thermoanaerobacter sp. (strain X514).